The primary structure comprises 349 residues: Nuclear distribution protein nudE homolog 1-B (349 aa).

A coiled-coil region spans residues 22 to 189; that stretch reads VAMKYKQCSE…ELAVQQKQEK (168 aa).

Belongs to the nudE family. Self-associates. Interacts with pafah1b1. In terms of processing, phosphorylated in mitosis.

The protein localises to the cytoplasm. Its subcellular location is the cytoskeleton. It localises to the microtubule organizing center. It is found in the centrosome. The protein resides in the spindle. The protein localises to the chromosome. Its subcellular location is the centromere. It localises to the kinetochore. It is found in the cleavage furrow. The protein resides in the cytoplasmic vesicle membrane. In terms of biological role, required for centrosome duplication and formation and function of the mitotic spindle. The chain is Nuclear distribution protein nudE homolog 1-B (nde1-b) from Xenopus laevis (African clawed frog).